The primary structure comprises 104 residues: Naphthalene 1,2-dioxygenase system, ferredoxin component (104 aa).

The Rieske domain occupies 6–101; sequence IDAVALYEIP…VKIEGQRVMI (96 aa). [2Fe-2S] cluster contacts are provided by C45, H47, C64, and H67.

The protein belongs to the bacterial ring-hydroxylating dioxygenase ferredoxin component family. The naphthalene dioxygenase (NDO) multicomponent enzyme system is composed of an electron transfer component and a dioxygenase component (iron sulfur protein (ISP)). The electron transfer component is composed of a ferredoxin reductase (NdoR) and a ferredoxin (NdoA), and the dioxygenase component is formed of a heterohexamer (trimer of heterodimers) of three large alpha subunits (NdoB) and three small beta subunits (NdoC). The cofactor is [2Fe-2S] cluster.

It functions in the pathway aromatic compound metabolism; naphthalene degradation. Functionally, component of the naphthalene dioxygenase (NDO) multicomponent enzyme system which catalyzes the incorporation of both atoms of molecular oxygen into naphthalene to form cis-(1R,2S)-dihydroxy-1,2-dihydronaphthalene. Functions as an intermediate electron transfer protein via a specific interaction with iron sulfur protein components (ISP) (NdoB and NdoC). This Pseudomonas aeruginosa protein is Naphthalene 1,2-dioxygenase system, ferredoxin component.